The chain runs to 2145 residues: Glutamate synthase [NADH] (2145 aa).

Residues 1–53 (MPVLKSDNFDPLEEAYEGGTIQNYNDEHHLHKSWANVIPDKRGLYDPDYEHDA) constitute a propeptide that is removed on maturation. Residue cysteine 54 is the For GATase activity of the active site. One can recognise a Glutamine amidotransferase type-2 domain in the interval 54–455 (CGVGFVANKH…PGDLFLVDTQ (402 aa)). Residue 1132-1189 (LAETHQTLVLNDLRRNVVVQTDGQLRTGFDIAVAVLLGAESFTLATVPLIAMGCVMLR) participates in FMN binding. 3 residues coordinate [3Fe-4S] cluster: cysteine 1185, cysteine 1191, and cysteine 1196. The stretch at 1551-1600 (KKVLLKEKAEAAKAKAKATSEYLKKFRSNQEVDDEVNTLLIANQKAKEQE) forms a coiled coil. 1928–1942 (GGGDTGNDCLGTSVR) provides a ligand contact to NAD(+). Threonine 2070 carries the phosphothreonine modification.

The protein belongs to the glutamate synthase family. As to quaternary structure, homotrimer. [3Fe-4S] cluster is required as a cofactor. It depends on FAD as a cofactor. FMN serves as cofactor.

It carries out the reaction 2 L-glutamate + NAD(+) = L-glutamine + 2-oxoglutarate + NADH + H(+). Its pathway is amino-acid biosynthesis; L-glutamate biosynthesis via GLT pathway; L-glutamate from 2-oxoglutarate and L-glutamine (NAD(+) route): step 1/1. It participates in energy metabolism; nitrogen metabolism. With respect to regulation, inhibited by homocysteine sulfonamide. Forms L-glutamate from L-glutamine and 2-oxoglutarate. Represents an alternative pathway to L-glutamate dehydrogenase for the biosynthesis of L-glutamate. Participates with glutamine synthetase in ammonia assimilation processes. The enzyme is specific for NADH, L-glutamine and 2-oxoglutarate. The chain is Glutamate synthase [NADH] (GLT1) from Saccharomyces cerevisiae (strain ATCC 204508 / S288c) (Baker's yeast).